The primary structure comprises 442 residues: MVGPSGESMPRNFKPETIALHGGQEPDPTTTSRAVPLYQTTSYVFKDTDHAARLFGLQEFGNIYTRLMNPTTDVLEKRVAALEGGVAALATASGQSAEMLALLNIVEAGQEIVASSSLYGGTYNLLHYTFPKLGIKVHFVDQSDPENFRKASNDKTRAFYAETLGNPKLDTLDIAAVSKVAKEVGVPLVIDNTMPSPYLVNPLKHGADIVVHSLTKFLGGHGTSIGGIIIDGGSFNWGNGKFKNFTEPDPSYHGLKFWEVFGKFEPFGGVNIAFILKARVQGLRDLGPAISPFNAWQILQGVETLPLRMERHSGNALKVAEFLQKHPKIEWVNYPGLSTDKNYATAKKYHERGLFGAIVGFEIKGGVEKAKKFIDGLELFSLLANIGDAKSLAIHPASTTHQQLTGPEQISAGVTPGFVRLSVGLENIDDILVDLEEALKNI.

Residues 1-32 are disordered; sequence MVGPSGESMPRNFKPETIALHGGQEPDPTTTS. An N6-(pyridoxal phosphate)lysine modification is found at K216.

Belongs to the trans-sulfuration enzymes family. The cofactor is pyridoxal 5'-phosphate.

The enzyme catalyses O-acetyl-L-homoserine + hydrogen sulfide = L-homocysteine + acetate. The protein operates within amino-acid biosynthesis; L-methionine biosynthesis via de novo pathway; L-homocysteine from O-acetyl-L-homoserine: step 1/1. With respect to regulation, feedback inhibited at very high concentrations of methionine or S-adenosylmethionine. In terms of biological role, catalyzes the conversion of O-acetyl-L-homoserine (OAH) into homocysteine in the methionine biosynthesis pathway. Can also use O-succinyl-homoserine (OSH), although at low efficiency. This is O-acetyl-L-homoserine sulfhydrylase from Leptospira meyeri.